A 320-amino-acid chain; its full sequence is Retron Ec86 reverse transcriptase (320 aa).

A Reverse transcriptase domain is found at Val34 to Ile248. The Mg(2+) site is built by Asp119, Asp197, and Asp198. The necessary and required for recognition and binding of RNA stretch occupies residues Lys230–Thr320.

Belongs to the bacterial reverse transcriptase family.

The enzyme catalyses DNA(n) + a 2'-deoxyribonucleoside 5'-triphosphate = DNA(n+1) + diphosphate. In terms of biological role, reverse transcriptase (RT) component of antiviral defense system retron Ec86, composed of a non-coding RNA (ncRNA), a ribosyltransferase/DNA-binding protein and this RT. Expression of the 3-gene retron confers protection against bacteriophage T5. At multiplicity of infection (MOI) of 0.02 cultures grow normally when infected with T5 without collapsing, at MOI 2 cultures enter growth stasis. Responsible for synthesis of msDNA (a branched molecule with RNA linked by a 2',5'-phosphodiester bond to ssDNA). The retron transcript serves as primer (from a conserved internal G residue) and template for the reaction, and codes for the RT. Recognizes only its cognate RNA as a primer template. Overexpression of the ncRNA and RT (without the ribosyltransferase), which leads to increased levels of msDNA, is mutagenic in vivo. This may be due to a mismatch in the msDNA stem which binds and sequesters MutS and/or MutL. In Escherichia coli, this protein is Retron Ec86 reverse transcriptase.